The sequence spans 430 residues: tRNA(Ile)-lysidine synthase (430 aa).

Residue 24 to 29 coordinates ATP; sequence SGGLDS.

The protein belongs to the tRNA(Ile)-lysidine synthase family.

The protein resides in the cytoplasm. The enzyme catalyses cytidine(34) in tRNA(Ile2) + L-lysine + ATP = lysidine(34) in tRNA(Ile2) + AMP + diphosphate + H(+). Ligates lysine onto the cytidine present at position 34 of the AUA codon-specific tRNA(Ile) that contains the anticodon CAU, in an ATP-dependent manner. Cytidine is converted to lysidine, thus changing the amino acid specificity of the tRNA from methionine to isoleucine. In Haemophilus influenzae (strain ATCC 51907 / DSM 11121 / KW20 / Rd), this protein is tRNA(Ile)-lysidine synthase.